The primary structure comprises 124 residues: Histone H2A (124 aa).

Positions 1–18 (MSGRGKGGKVKGKAKSRS) are enriched in basic residues. The tract at residues 1-21 (MSGRGKGGKVKGKAKSRSNRA) is disordered. An N-acetylserine modification is found at serine 2. Serine 2 is subject to Phosphoserine. An N6-succinyllysine modification is found at lysine 36. Glutamine 104 carries the post-translational modification N5-methylglutamine. A Glycyl lysine isopeptide (Lys-Gly) (interchain with G-Cter in ubiquitin) cross-link involves residue lysine 119. Threonine 120 carries the post-translational modification Phosphothreonine.

This sequence belongs to the histone H2A family. In terms of assembly, the nucleosome is a histone octamer containing two molecules each of H2A, H2B, H3 and H4 assembled in one H3-H4 heterotetramer and two H2A-H2B heterodimers. The octamer wraps approximately 147 bp of DNA. The chromatin-associated form, but not the free cytoplasmic form, is phosphorylated on Thr-120 by NHK-1 during mitosis, and dephosphorylated during S-phase. Also phosphorylated on Thr-120 by NHK-1 during prophase I of meiosis; which is required for acetylation of H3 'Lys-14' and H4 'Lys-5', diassembly of the synaptonemal complex, and karyosome formation. In terms of processing, monoubiquitination of Lys-119 by sce/dRING gives a specific tag for epigenetic transcriptional repression. Post-translationally, phosphorylation on Ser-2 is enhanced during mitosis. Phosphorylation on Ser-2 directly represses transcription.

The protein resides in the nucleus. Its subcellular location is the chromosome. Its function is as follows. Core component of nucleosome. Nucleosomes wrap and compact DNA into chromatin, limiting DNA accessibility to the cellular machineries which require DNA as a template. Histones thereby play a central role in transcription regulation, DNA repair, DNA replication and chromosomal stability. DNA accessibility is regulated via a complex set of post-translational modifications of histones, also called histone code, and nucleosome remodeling. The polypeptide is Histone H2A (His2A) (Drosophila erecta (Fruit fly)).